A 267-amino-acid polypeptide reads, in one-letter code: 2-keto-3-deoxy-L-rhamnonate aldolase (267 aa).

His-49 functions as the Proton acceptor in the catalytic mechanism. Gln-151 is a binding site for substrate. Mg(2+) is bound at residue Glu-153. Substrate contacts are provided by Ala-178 and Asp-179. Asp-179 is a binding site for Mg(2+).

This sequence belongs to the HpcH/HpaI aldolase family. KDR aldolase subfamily. In terms of assembly, homohexamer. The cofactor is Mg(2+).

The enzyme catalyses 2-dehydro-3-deoxy-L-rhamnonate = (S)-lactaldehyde + pyruvate. Its function is as follows. Catalyzes the reversible retro-aldol cleavage of 2-keto-3-deoxy-L-rhamnonate (KDR) to pyruvate and lactaldehyde. The sequence is that of 2-keto-3-deoxy-L-rhamnonate aldolase from Escherichia coli O17:K52:H18 (strain UMN026 / ExPEC).